Reading from the N-terminus, the 251-residue chain is Segregation and condensation protein A (251 aa).

It belongs to the ScpA family. In terms of assembly, component of a cohesin-like complex composed of ScpA, ScpB and the Smc homodimer, in which ScpA and ScpB bind to the head domain of Smc. The presence of the three proteins is required for the association of the complex with DNA.

The protein resides in the cytoplasm. In terms of biological role, participates in chromosomal partition during cell division. May act via the formation of a condensin-like complex containing Smc and ScpB that pull DNA away from mid-cell into both cell halves. The polypeptide is Segregation and condensation protein A (Clostridium botulinum (strain Eklund 17B / Type B)).